A 562-amino-acid chain; its full sequence is Potassium-transporting ATPase potassium-binding subunit (562 aa).

The next 10 membrane-spanning stretches (helical) occupy residues 5–25, 63–83, 132–152, 175–195, 250–270, 279–299, 379–399, 416–436, 483–503, and 526–546; these read AFLLIFGLLLTVLIVAQPLGS, AAAILALNLIGIVVLFVLLMA, GLTVQNFLSAASGIAVAFALI, LYVLLPLSLLLALFFVSQGVL, LSNIVQMLAILLIPTALCFAF, QGHALLWAMALIFIVAAAVVM, GLYGMLLFVLLTVFIAGLMIG, MTALAILIPPALVLLGTALAL, VLLAVAMLLGRFAVMVPVLAI, and LFIGMLIAIVLLIGALTFIPA.

This sequence belongs to the KdpA family. As to quaternary structure, the system is composed of three essential subunits: KdpA, KdpB and KdpC.

Its subcellular location is the cell inner membrane. In terms of biological role, part of the high-affinity ATP-driven potassium transport (or Kdp) system, which catalyzes the hydrolysis of ATP coupled with the electrogenic transport of potassium into the cytoplasm. This subunit binds the periplasmic potassium ions and delivers the ions to the membrane domain of KdpB through an intramembrane tunnel. The protein is Potassium-transporting ATPase potassium-binding subunit of Pectobacterium atrosepticum (strain SCRI 1043 / ATCC BAA-672) (Erwinia carotovora subsp. atroseptica).